Consider the following 500-residue polypeptide: Glutelin type-B 4 (500 aa).

A signal peptide spans 1 to 24 (MATIAFSRLSIYFCVLLLCHGSMA). Cystine bridges form between Cys45–Cys78 and Cys121–Cys310. 2 Cupin type-1 domains span residues 50–245 (LQAF…LVAK) and 316–465 (LNIE…EQAR). Over residues 481–493 (RYQQQTYPGFSNE) the composition is skewed to polar residues. The interval 481–500 (RYQQQTYPGFSNESENEALE) is disordered.

This sequence belongs to the 11S seed storage protein (globulins) family. In terms of assembly, hexamer; each subunit is composed of an acidic and a basic chain derived from a single precursor and linked by a disulfide bond. Expressed in endosperm (at protein level).

Its function is as follows. Seed storage protein. The protein is Glutelin type-B 4 (GLUB4) of Oryza sativa subsp. japonica (Rice).